The sequence spans 75 residues: uncharacterized protein (75 aa).

This is an uncharacterized protein from Halalkalibacterium halodurans (strain ATCC BAA-125 / DSM 18197 / FERM 7344 / JCM 9153 / C-125) (Bacillus halodurans).